A 600-amino-acid polypeptide reads, in one-letter code: Pyranose dehydrogenase (600 aa).

The N-terminal stretch at 1–25 (MFPRVVRLNSRLVSFALLGLQIANG) is a signal peptide. Residues Asn99 and Asn114 are each glycosylated (N-linked (GlcNAc...) asparagine). His127 is subject to Tele-8alpha-FAD histidine. 5 N-linked (GlcNAc...) asparagine glycosylation sites follow: Asn199, Asn275, Asn342, Asn399, and Asn507. The Proton acceptor role is filled by His535. Asn546 is a glycosylation site (N-linked (GlcNAc...) asparagine). The active site involves His579.

Belongs to the GMC oxidoreductase family. Monomer. FAD is required as a cofactor. N-glycosylated.

It localises to the secreted. The enzyme catalyses pyranose + acceptor = pyranos-2-ulose + reduced acceptor.. The catalysed reaction is pyranose + acceptor = pyranos-3-ulose + reduced acceptor.. It catalyses the reaction pyranose + acceptor = pyranos-2,3-diulose + reduced acceptor.. It carries out the reaction a pyranoside + acceptor = a pyranosid-3-ulose + reduced acceptor.. The enzyme catalyses a pyranoside + acceptor = a pyranosid-3,4-diulose + reduced acceptor.. Functionally, catalyzes the single-oxidation or sequential double oxidation reaction of carbohydrates primarily at carbon-2 and/or carbon-3 with the concomitant reduction of the flavin. The enzyme exhibits a broad sugar substrate specificity, oxidizing different aldopyranoses to the corresponding C-1, C-2, C-3 or C-1,2, C-2,3 and C-3,4 (di)dehydro sugars with substrate-specific regioselectivity. Accepts only a narrow range of electron acceptors such as substituted benzoquinones and complexed metal ions and reacts extremely slowly with O(2) as acceptor. May play a role in the natural recycling of plant matter by oxidizing all major monosaccharides in lignocellulose and by reducing quinone compounds or reactive radical species generated during lignin depolymerization. This Agaricus xanthodermus (Poison yellow meadow mushroom) protein is Pyranose dehydrogenase.